We begin with the raw amino-acid sequence, 996 residues long: NACHT, LRR and PYD domains-containing protein 9 (996 aa).

One can recognise a Pyrin domain in the interval M1–Q94. The 320-residue stretch at P150–P469 folds into the NACHT domain. An ATP-binding site is contributed by G156–T163. 6 LRR repeats span residues K748–E769, A777–Q798, S805–C825, N834–T855, K862–K883, and K891–L914.

It belongs to the NLRP family. Sensor component of NLRP9 inflammasomes. Inflammasomes are supramolecular complexes that assemble in the cytosol in response to pathogens, such as rotavirus, and play critical roles in innate immunity and inflammation. The core of NLRP9 inflammasomes consists of a signal sensor component (NLRP9), an adapter (ASC/PYCARD), which recruits an effector pro-inflammatory caspase (CASP1). Within the complex, NLRP9 and PYCARD interact via their respective DAPIN/pyrin domains. This interaction initiates speck formation (nucleation) which greatly enhances further addition of soluble PYCARD molecules to the speck in a prion-like polymerization process. Clustered PYCARD nucleates the formation of CASP1 filaments through the interaction of their respective CARD domains, acting as a platform for CASP1 polymerization. CASP1 filament formation increases local enzyme concentration, resulting in trans-autocleavage and activation. Active CASP1 then processes IL1B and IL18 precursors, leading to the release of mature cytokines in the extracellular milieu and inflammatory response. Interacts with DHX9 upon rotavirus infection; this interaction may trigger inflammasome activation and inflammatory response. Detected exclusively in testis and ovary, and at high level in the oocyte from antral follicles.

The protein localises to the cytoplasm. The protein resides in the inflammasome. Functionally, as the sensor component of the NLRP9 inflammasome, plays a crucial role in innate immunity and inflammation. In response to pathogens, including rotavirus, initiates the formation of the inflammasome polymeric complex, made of NLRP9, PYCARD and CASP1. Recruitment of proCASP1 to the inflammasome promotes its activation and CASP1-catalyzed IL1B and IL18 maturation and release in the extracellular milieu. The active cytokines stimulate inflammatory responses. Inflammasomes can also induce pyroptosis, an inflammatory form of programmed cell death. NLRP9 inflammasome activation may be initiated by DHX9 interaction with viral double-stranded RNA (dsRNA), preferentially to short dsRNA segments. This Bos taurus (Bovine) protein is NACHT, LRR and PYD domains-containing protein 9 (NLRP9).